The following is a 742-amino-acid chain: Transcription factor FFUJ_09177 (742 aa).

The zn(2)-C6 fungal-type DNA-binding region spans 15–41 (CVSCARSKQRCDGHSPCGRCSLKNLDC). Disordered regions lie at residues 50 to 80 (GQNSTRGASPQSPSASRESYSQNTLPVVQSQ) and 218 to 244 (HSLDISSYQGQSNQTSPETTSHSSVRD). The segment covering 218–240 (HSLDISSYQGQSNQTSPETTSHS) has biased composition (polar residues).

The protein localises to the nucleus. Transcription factor; part of the DMATS1 gene cluster that mediates the biosynthesis of a reversely N-prenylated monomeric L-tryptophan (r-N-DMAT). Seems not to regulate the expression of the DMATS1 cluster. The polypeptide is Transcription factor FFUJ_09177 (Gibberella fujikuroi (strain CBS 195.34 / IMI 58289 / NRRL A-6831) (Bakanae and foot rot disease fungus)).